A 446-amino-acid polypeptide reads, in one-letter code: Probable glucuronosyltransferase Os04g0650300 (446 aa).

Residues 1–30 (MKLPLLRPLWPMLSPAAGSPDSPPEPSKPS) lie on the Cytoplasmic side of the membrane. Residues 31-51 (LPAAWLLLHALFCATSMAVGF) form a helical; Signal-anchor for type II membrane protein membrane-spanning segment. The Lumenal portion of the chain corresponds to 52–446 (RFSRLIVYLL…TTLLNTEGQH (395 aa)). The N-linked (GlcNAc...) asparagine glycan is linked to N87. A disordered region spans residues 425-446 (QQDAKPETPLKRTTLLNTEGQH).

This sequence belongs to the glycosyltransferase 43 family.

Its subcellular location is the golgi apparatus membrane. Involved in the synthesis of glucuronoxylan hemicellulose in secondary cell walls. This Oryza sativa subsp. japonica (Rice) protein is Probable glucuronosyltransferase Os04g0650300.